Consider the following 205-residue polypeptide: Listeria nuclear targeted protein A (205 aa).

An N-terminal signal peptide occupies residues 1–36 (MKKLVAWFNGLSKMWKVVVIIGAVFVVIIALTTGED).

Interacts specifically with host BAHD1.

The protein localises to the secreted. Its subcellular location is the host nucleus. Relieves the repression of host cell immune response genes (interferon-stimulated genes) by blocking the recruitment of host BAHD1 to these genes. May modulate interferon-mediated immune response to control bacterial colonization of the host. This Listeria monocytogenes serovar 1/2a (strain ATCC BAA-679 / EGD-e) protein is Listeria nuclear targeted protein A (lntA).